The primary structure comprises 293 residues: Pyridoxal 5'-phosphate synthase subunit PdxS (293 aa).

D23 lines the D-ribose 5-phosphate pocket. The Schiff-base intermediate with D-ribose 5-phosphate role is filled by K80. Position 152 (G152) interacts with D-ribose 5-phosphate. R164 is a binding site for D-glyceraldehyde 3-phosphate. D-ribose 5-phosphate is bound by residues G213 and 234-235 (GS).

This sequence belongs to the PdxS/SNZ family. In the presence of PdxT, forms a dodecamer of heterodimers.

It catalyses the reaction aldehydo-D-ribose 5-phosphate + D-glyceraldehyde 3-phosphate + L-glutamine = pyridoxal 5'-phosphate + L-glutamate + phosphate + 3 H2O + H(+). The protein operates within cofactor biosynthesis; pyridoxal 5'-phosphate biosynthesis. Its function is as follows. Catalyzes the formation of pyridoxal 5'-phosphate from ribose 5-phosphate (RBP), glyceraldehyde 3-phosphate (G3P) and ammonia. The ammonia is provided by the PdxT subunit. Can also use ribulose 5-phosphate and dihydroxyacetone phosphate as substrates, resulting from enzyme-catalyzed isomerization of RBP and G3P, respectively. This Syntrophus aciditrophicus (strain SB) protein is Pyridoxal 5'-phosphate synthase subunit PdxS.